The following is a 589-amino-acid chain: ATP-dependent lipid A-core flippase (589 aa).

5 helical membrane passes run 29-49 (LLLV…TGFL), 70-90 (WLPV…YITD), 157-177 (VIGA…TILV), 261-281 (MIGA…ALAG), and 283-303 (LTAG…PGLK). The ABC transmembrane type-1 domain occupies 32–314 (VAALIAALIE…LTNVQNMVQR (283 aa)). One can recognise an ABC transporter domain in the interval 346 to 582 (IEFRDVTARY…GGLYSHLHGM (237 aa)). Residue 380–387 (GRSGSGKS) participates in ATP binding.

The protein belongs to the ABC transporter superfamily. Lipid exporter (TC 3.A.1.106) family. In terms of assembly, homodimer.

The protein resides in the cell inner membrane. The catalysed reaction is ATP + H2O + lipid A-core oligosaccharideSide 1 = ADP + phosphate + lipid A-core oligosaccharideSide 2.. Involved in lipopolysaccharide (LPS) biosynthesis. Translocates lipid A-core from the inner to the outer leaflet of the inner membrane. Transmembrane domains (TMD) form a pore in the inner membrane and the ATP-binding domain (NBD) is responsible for energy generation. The sequence is that of ATP-dependent lipid A-core flippase from Xanthomonas oryzae pv. oryzae (strain MAFF 311018).